A 236-amino-acid polypeptide reads, in one-letter code: uncharacterized protein (236 aa).

The disordered stretch occupies residues His-186–Leu-236. Residues Gly-201–Leu-236 are compositionally biased toward basic and acidic residues. Ser-221 is subject to Phosphoserine.

This is an uncharacterized protein from Saccharomyces cerevisiae (strain ATCC 204508 / S288c) (Baker's yeast).